The primary structure comprises 473 residues: Vasculin-like protein 1 (473 aa).

Polar residues predominate over residues Ser-14–Thr-25. Residues Ser-14 to Asn-55 are disordered. The span at Phe-26–Gly-38 shows a compositional bias: basic and acidic residues. Residues Ser-49 and Ser-76 each carry the phosphoserine modification. Disordered stretches follow at residues Gly-88–Cys-127 and Asp-155–Pro-189. Positions Ser-103 to Gly-112 are enriched in polar residues. Residues Asn-113–Lys-125 show a composition bias toward basic residues. The residue at position 199 (Ser-199) is a Phosphoserine. Disordered regions lie at residues Leu-235–Ser-267 and Leu-281–Thr-316. Position 289 is a phosphoserine (Ser-289). The span at Glu-292–Thr-309 shows a compositional bias: low complexity. A Phosphothreonine modification is found at Thr-298. Ser-381 bears the Phosphoserine mark. The disordered stretch occupies residues Glu-453–Lys-473.

Belongs to the vasculin family.

It localises to the nucleus. Its function is as follows. Possible transcription factor. This Mus musculus (Mouse) protein is Vasculin-like protein 1 (Gpbp1l1).